Here is a 313-residue protein sequence, read N- to C-terminus: 3'-5' exoribonuclease YhaM (313 aa).

The segment at residues 22–90 (SSVKGTASNG…QLKIRQIRQA (69 aa)) is a DNA-binding region (OB). The region spanning 163-279 (HVVSMLRLAK…LHQIDLMDAS (117 aa)) is the HD domain.

Belongs to the YhaM family.

In terms of biological role, shows a 3'-5' exoribonuclease activity. The sequence is that of 3'-5' exoribonuclease YhaM from Listeria monocytogenes serovar 1/2a (strain ATCC BAA-679 / EGD-e).